A 441-amino-acid chain; its full sequence is 3-phosphoshikimate 1-carboxyvinyltransferase (441 aa).

The tract at residues 1–24 (MSGTGQSDDPRELKAGGSLQGRVK) is disordered. The 3-phosphoshikimate site is built by K29, S30, and R34. K29 is a binding site for phosphoenolpyruvate. Phosphoenolpyruvate is bound by residues G103 and R132. Residues S177, Q179, D328, and K355 each coordinate 3-phosphoshikimate. Residue Q179 coordinates phosphoenolpyruvate. The active-site Proton acceptor is D328. Residues R359 and R401 each coordinate phosphoenolpyruvate.

Belongs to the EPSP synthase family. As to quaternary structure, monomer.

The protein resides in the cytoplasm. It catalyses the reaction 3-phosphoshikimate + phosphoenolpyruvate = 5-O-(1-carboxyvinyl)-3-phosphoshikimate + phosphate. It functions in the pathway metabolic intermediate biosynthesis; chorismate biosynthesis; chorismate from D-erythrose 4-phosphate and phosphoenolpyruvate: step 6/7. Its function is as follows. Catalyzes the transfer of the enolpyruvyl moiety of phosphoenolpyruvate (PEP) to the 5-hydroxyl of shikimate-3-phosphate (S3P) to produce enolpyruvyl shikimate-3-phosphate and inorganic phosphate. This chain is 3-phosphoshikimate 1-carboxyvinyltransferase, found in Synechococcus sp. (strain CC9605).